A 440-amino-acid polypeptide reads, in one-letter code: UDP-N-acetylmuramoylalanine--D-glutamate ligase (440 aa).

109–115 is an ATP binding site; that stretch reads GTNGKTT.

The protein belongs to the MurCDEF family.

It is found in the cytoplasm. The enzyme catalyses UDP-N-acetyl-alpha-D-muramoyl-L-alanine + D-glutamate + ATP = UDP-N-acetyl-alpha-D-muramoyl-L-alanyl-D-glutamate + ADP + phosphate + H(+). Its pathway is cell wall biogenesis; peptidoglycan biosynthesis. Functionally, cell wall formation. Catalyzes the addition of glutamate to the nucleotide precursor UDP-N-acetylmuramoyl-L-alanine (UMA). This chain is UDP-N-acetylmuramoylalanine--D-glutamate ligase, found in Rubrobacter xylanophilus (strain DSM 9941 / JCM 11954 / NBRC 16129 / PRD-1).